The following is a 366-amino-acid chain: tRNA/tmRNA (uracil-C(5))-methyltransferase (366 aa).

Residues Gln-190, Tyr-218, Asn-223, Glu-239, and Asp-299 each contribute to the S-adenosyl-L-methionine site. The Nucleophile role is filled by Cys-324. Glu-358 serves as the catalytic Proton acceptor.

Belongs to the class I-like SAM-binding methyltransferase superfamily. RNA M5U methyltransferase family. TrmA subfamily.

It catalyses the reaction uridine(54) in tRNA + S-adenosyl-L-methionine = 5-methyluridine(54) in tRNA + S-adenosyl-L-homocysteine + H(+). It carries out the reaction uridine(341) in tmRNA + S-adenosyl-L-methionine = 5-methyluridine(341) in tmRNA + S-adenosyl-L-homocysteine + H(+). Functionally, dual-specificity methyltransferase that catalyzes the formation of 5-methyluridine at position 54 (m5U54) in all tRNAs, and that of position 341 (m5U341) in tmRNA (transfer-mRNA). The polypeptide is tRNA/tmRNA (uracil-C(5))-methyltransferase (Escherichia coli O81 (strain ED1a)).